The primary structure comprises 130 residues: Protein ApaG (130 aa).

The 125-residue stretch at 3-127 folds into the ApaG domain; the sequence is RALTRDIEVT…FSLDSPGLVR (125 aa).

The polypeptide is Protein ApaG (Sinorhizobium fredii (strain NBRC 101917 / NGR234)).